The sequence spans 372 residues: GTPase Obg (372 aa).

The Obg domain occupies 1–159; it reads MKFIDEARIE…RMLKLELKVL (159 aa). The tract at residues 128-147 is disordered; the sequence is LHFKSSTNRAPRQKTDGKPG. The OBG-type G domain occupies 160–334; sequence ADVGLLGMPN…LVYAIHDYLV (175 aa). Residues 166 to 173, 191 to 195, 213 to 216, 284 to 287, and 315 to 317 contribute to the GTP site; these read GMPNAGKS, FTTLA, DIPG, NKLD, and SAL. Residues serine 173 and threonine 193 each contribute to the Mg(2+) site.

The protein belongs to the TRAFAC class OBG-HflX-like GTPase superfamily. OBG GTPase family. As to quaternary structure, monomer. Requires Mg(2+) as cofactor.

Its subcellular location is the cytoplasm. An essential GTPase which binds GTP, GDP and possibly (p)ppGpp with moderate affinity, with high nucleotide exchange rates and a fairly low GTP hydrolysis rate. Plays a role in control of the cell cycle, stress response, ribosome biogenesis and in those bacteria that undergo differentiation, in morphogenesis control. In Burkholderia pseudomallei (strain 668), this protein is GTPase Obg.